A 284-amino-acid chain; its full sequence is Release factor glutamine methyltransferase (284 aa).

Residues 121-125, Asp144, Trp172, and Asn188 each bind S-adenosyl-L-methionine; that span reads GTGTG. Residue 188–191 participates in substrate binding; it reads NPPY.

This sequence belongs to the protein N5-glutamine methyltransferase family. PrmC subfamily.

The enzyme catalyses L-glutaminyl-[peptide chain release factor] + S-adenosyl-L-methionine = N(5)-methyl-L-glutaminyl-[peptide chain release factor] + S-adenosyl-L-homocysteine + H(+). Functionally, methylates the class 1 translation termination release factors RF1/PrfA and RF2/PrfB on the glutamine residue of the universally conserved GGQ motif. The sequence is that of Release factor glutamine methyltransferase from Aliivibrio fischeri (strain ATCC 700601 / ES114) (Vibrio fischeri).